The sequence spans 292 residues: UPF0282 protein MJ1629 (292 aa).

Belongs to the UPF0282 family.

The chain is UPF0282 protein MJ1629 from Methanocaldococcus jannaschii (strain ATCC 43067 / DSM 2661 / JAL-1 / JCM 10045 / NBRC 100440) (Methanococcus jannaschii).